The primary structure comprises 103 residues: Defensin-like protein 268 (103 aa).

A signal peptide spans 1 to 24 (MARLIFHFVFALILAAYLLSVTDA). 4 disulfides stabilise this stretch: Cys-44–Cys-103, Cys-68–Cys-87, Cys-74–Cys-98, and Cys-78–Cys-100.

Belongs to the DEFL family.

It is found in the secreted. The chain is Defensin-like protein 268 from Arabidopsis thaliana (Mouse-ear cress).